Here is a 301-residue protein sequence, read N- to C-terminus: UDP-N-acetylenolpyruvoylglucosamine reductase (301 aa).

The region spanning 24–190 (RVGGLAQFYD…VSAQLQLQPG (167 aa)) is the FAD-binding PCMH-type domain. Arg-169 is an active-site residue. Ser-220 functions as the Proton donor in the catalytic mechanism. The active site involves Glu-290.

This sequence belongs to the MurB family. FAD is required as a cofactor.

It is found in the cytoplasm. The catalysed reaction is UDP-N-acetyl-alpha-D-muramate + NADP(+) = UDP-N-acetyl-3-O-(1-carboxyvinyl)-alpha-D-glucosamine + NADPH + H(+). Its pathway is cell wall biogenesis; peptidoglycan biosynthesis. In terms of biological role, cell wall formation. This is UDP-N-acetylenolpyruvoylglucosamine reductase from Synechococcus sp. (strain ATCC 27144 / PCC 6301 / SAUG 1402/1) (Anacystis nidulans).